The primary structure comprises 159 residues: MQGDPDVLRLLNEQLTSELTAINQYFLHSKMQENWGFTELAERTRVESFDEMRHAEAITDRILLLDGLPNYQRIGSLRVGQTLREQFEADLAIEYEVMSRLKPGIIMCREKQDSTSAVLLEKIVADEEEHIDYLETQLALMGQLGEELYSAQCVSRPPS.

Positions 1–145 (MQGDPDVLRL…TQLALMGQLG (145 aa)) constitute a Ferritin-like diiron domain. The Fe cation site is built by E18 and E51. Residue M52 participates in heme b binding. Fe cation contacts are provided by H54, E94, E127, and H130.

It belongs to the bacterioferritin family. Homooligomer of 24 subunits, arranged as 12 dimers, that are packed together to form an approximately spherical molecule with a central cavity, in which large amounts of iron can be deposited. Requires heme b as cofactor.

Its subcellular location is the cytoplasm. The protein localises to the cytosol. It is found in the membrane. It catalyses the reaction 4 Fe(2+) + O2 + 4 H(+) = 4 Fe(3+) + 2 H2O. It carries out the reaction Fe(2+)(in) = Fe(2+)(out). Iron-storage protein, whose ferroxidase center binds Fe(2+), oxidizes it using dioxygen to Fe(3+), and participates in the subsequent Fe(3+) oxide mineral core formation within the central cavity of the BFR protein shell. Probably plays a crucial role in the intracellular existence of this organism by functioning as a temporary depository for iron in iron deprivation. In Mycobacterium leprae (strain TN), this protein is Bacterioferritin (bfr).